We begin with the raw amino-acid sequence, 417 residues long: Xylulose 5-phosphate/phosphate translocator, chloroplastic (417 aa).

A chloroplast-targeting transit peptide spans 1-82 (MISLNLSPSL…GFSRKPRSIA (82 aa)). The disordered stretch occupies residues 66–102 (TNPESSSGFSRKPRSIAAVGSSDSNPDEKSDLGEAEK). A83 carries the post-translational modification N-acetylalanine. The segment covering 91 to 102 (PDEKSDLGEAEK) has biased composition (basic and acidic residues). Transmembrane regions (helical) follow at residues 109 to 129 (TLQLGIVFGLWYFQNIVFNIF), 141 to 161 (WLLASFQLFAGSIWMLVLWSF), 173 to 193 (FIIALLGPALFHTIGHISACV), 198 to 218 (VAVSFTHVIKSAEPVFSVIFS), 225 to 245 (YPLAVWLSILPIVMGCSLAAV), 247 to 267 (EVSFNLGGLSGAMISNVGFVL), 287 to 307 (LYGCISILSLLYLFPVAIFVE), 318 to 338 (AIASVGTPSTFYFWVLLSGVF), and 384 to 404 (LNALGSAIAIFGTFLYSQATA). The EamA domain maps to 127–243 (NIFNKKALNV…LPIVMGCSLA (117 aa)).

This sequence belongs to the TPT transporter family. TPT (TC 2.A.7.9) subfamily. Widely expressed.

The protein localises to the plastid. It is found in the chloroplast membrane. In terms of biological role, sugar phosphate/phosphate translocator that transports inorganic phosphate, triose phosphate, 3-phosphoglycerate, xylulose 5-phosphate (Xul-5-P) and to a lesser extent ribulose 5-phosphate. Does not transport ribose 5-phosphate or hexose phosphates. Provides cytosolic Xul-5-P to the chloroplast, where it is used as an intermediate in the plastidic pentose phosphate pathways. This is Xylulose 5-phosphate/phosphate translocator, chloroplastic (XPT) from Arabidopsis thaliana (Mouse-ear cress).